We begin with the raw amino-acid sequence, 683 residues long: Protein hook (683 aa).

The 119-residue stretch at 5-123 folds into the Calponin-homology (CH) domain; that stretch reads NGMYYSLLEW…RLLQLVLGCA (119 aa). 2 coiled-coil regions span residues 135-440 and 484-594; these read EIMC…LKCG and QTAL…AKEV.

Belongs to the hook family. As to quaternary structure, homodimer. Interacts with microtubules via its N-terminus.

It is found in the cytoplasm. The protein localises to the cytoskeleton. Its subcellular location is the endosome. It localises to the synapse. Its function is as follows. Involved in endocytic trafficking by stabilizing organelles of the endocytic pathway. Probably acts as a cytoskeletal linker protein required to tether endosome vesicles to the cytoskeleton. Involved in modulation of endocytosis at stages required for down-regulation of membrane proteins that control synapse size. Not involved in synaptic vesicle recycling. Required in R7 cells for boss endocytosis into multivesicular bodies (MVBs). Has a role in regulating adult longevity. The chain is Protein hook from Drosophila grimshawi (Hawaiian fruit fly).